The chain runs to 266 residues: Undecaprenyl-diphosphatase (266 aa).

8 helical membrane-spanning segments follow: residues 1–21 (MTLF…FLPI), 39–59 (QGLA…MIYF), 87–107 (WYVI…KGWI), 113–133 (TALV…YADA), 143–163 (GLTL…LIPG), 187–207 (FSFL…TLDL), 218–238 (ALLY…YLFL), and 244–264 (IGML…LWFV).

The protein belongs to the UppP family.

The protein localises to the cell inner membrane. It catalyses the reaction di-trans,octa-cis-undecaprenyl diphosphate + H2O = di-trans,octa-cis-undecaprenyl phosphate + phosphate + H(+). Functionally, catalyzes the dephosphorylation of undecaprenyl diphosphate (UPP). Confers resistance to bacitracin. The chain is Undecaprenyl-diphosphatase from Alteromonas mediterranea (strain DSM 17117 / CIP 110805 / LMG 28347 / Deep ecotype).